The sequence spans 273 residues: ABC transporter glutamine-binding protein GlnH (273 aa).

An N-terminal signal peptide occupies residues 1–20 (MKKIFSLALISLFAVILLAA). A lipid anchor (N-palmitoyl cysteine) is attached at Cys21. A lipid anchor (S-diacylglycerol cysteine) is attached at Cys21.

This sequence belongs to the bacterial solute-binding protein 3 family. In terms of assembly, the complex is composed of two ATP-binding proteins (GlnQ), two transmembrane proteins (GlnM and GlnP) and a solute-binding protein (GlnH).

The protein localises to the cell membrane. In terms of biological role, part of the ABC transporter complex GlnHMPQ involved in glutamine transport. The sequence is that of ABC transporter glutamine-binding protein GlnH (glnH) from Bacillus subtilis (strain 168).